A 573-amino-acid chain; its full sequence is Sulfate adenylyltransferase (573 aa).

The N-terminal stretch occupies residues 1 to 169 (MANSPHGGVL…LEAVNRLQHY (169 aa)). The interval 170-394 (DFVELRYTPS…LRESHPPRSQ (225 aa)) is catalytic. Position 197 (Q197) interacts with sulfate. ATP is bound by residues 197–200 (QTRN) and 291–294 (GRDH). Catalysis depends on residues T198, R199, and N200. R199 contributes to the sulfate binding site. A295 contributes to the sulfate binding site. Residue M333 participates in ATP binding. The segment at 395 to 573 (QGFTIFLTGY…LESQGLLDRF (179 aa)) is allosteric regulation domain; adenylyl-sulfate kinase-like. 3'-phosphoadenylyl sulfate-binding positions include 434–437 (ETVR), R451, 477–478 (IA), and R515.

It in the N-terminal section; belongs to the sulfate adenylyltransferase family. This sequence in the C-terminal section; belongs to the APS kinase family. In terms of assembly, homohexamer. Dimer of trimers.

Its subcellular location is the cytoplasm. It carries out the reaction sulfate + ATP + H(+) = adenosine 5'-phosphosulfate + diphosphate. Its pathway is sulfur metabolism; hydrogen sulfide biosynthesis; sulfite from sulfate: step 1/3. Allosterically inhibited by 3'-phosphoadenosine 5'-phosphosulfate (PAPS). Functionally, catalyzes the first intracellular reaction of sulfate assimilation, forming adenosine-5'-phosphosulfate (APS) from inorganic sulfate and ATP. Plays an important role in sulfate activation as a component of the biosynthesis pathway of sulfur-containing amino acids. The polypeptide is Sulfate adenylyltransferase (Chaetomium globosum (strain ATCC 6205 / CBS 148.51 / DSM 1962 / NBRC 6347 / NRRL 1970) (Soil fungus)).